The sequence spans 912 residues: Probable dipeptidyl-aminopeptidase B (912 aa).

The tract at residues 1 to 74 (MSSALSPEGD…GPFLGPGASL (74 aa)) is disordered. The Cytoplasmic segment spans residues 1–85 (MSSALSPEGD…REPMDRGLRR (85 aa)). Low complexity predominate over residues 16-27 (DSLSSVSTTSLV). The span at 30–50 (RIQEKTEMDADNDKEKDPRAL) shows a compositional bias: basic and acidic residues. The span at 51 to 63 (DDEDPLRDEDDLE) shows a compositional bias: acidic residues. A helical; Signal-anchor for type II membrane protein transmembrane segment spans residues 86–106 (ILIIVAVVFIGGWLAGLGIFI). The Vacuolar segment spans residues 107-912 (ASGSYHHESD…KRHMVPQALV (806 aa)). Residue Asn344 is glycosylated (N-linked (GlcNAc...) asparagine). Ser749 serves as the catalytic Charge relay system. The N-linked (GlcNAc...) asparagine glycan is linked to Asn808. Catalysis depends on charge relay system residues Asp826 and His859. Positions 892–912 (PQPQKDPVEKEKRHMVPQALV) are disordered.

This sequence belongs to the peptidase S9B family.

Its subcellular location is the vacuole membrane. The enzyme catalyses Release of an N-terminal dipeptide, Xaa-Yaa-|-Zaa-, from a polypeptide, preferentially when Yaa is Pro, provided Zaa is neither Pro nor hydroxyproline.. In terms of biological role, type IV dipeptidyl-peptidase which removes N-terminal dipeptides sequentially from polypeptides having unsubstituted N-termini provided that the penultimate residue is proline. In Fusarium vanettenii (strain ATCC MYA-4622 / CBS 123669 / FGSC 9596 / NRRL 45880 / 77-13-4) (Fusarium solani subsp. pisi), this protein is Probable dipeptidyl-aminopeptidase B (DAPB).